Here is a 270-residue protein sequence, read N- to C-terminus: UPF0354 protein BCE_4835 (270 aa).

Belongs to the UPF0354 family.

The polypeptide is UPF0354 protein BCE_4835 (Bacillus cereus (strain ATCC 10987 / NRS 248)).